Here is a 502-residue protein sequence, read N- to C-terminus: Maturase K (502 aa).

Belongs to the intron maturase 2 family. MatK subfamily.

Its subcellular location is the plastid. The protein localises to the chloroplast. Usually encoded in the trnK tRNA gene intron. Probably assists in splicing its own and other chloroplast group II introns. This is Maturase K from Brassica campestris (Field mustard).